The chain runs to 4499 residues: Dynein alpha chain, flagellar outer arm (4499 aa).

Positions 1–1677 (MSIFWEVPNA…RIRICDASFP (1677 aa)) are stem. 6 Kelch repeats span residues 29 to 84 (RFVL…ALDD), 86 to 135 (RLLV…RFGS), 137 to 183 (VFIF…RFDH), 199 to 245 (KLLI…VCDG), 253 to 304 (KVFS…FDVK), and 307 to 358 (SLLI…IRGL). Residues 425–534 (FANTAARNCI…IRGSPFTVKC (110 aa)) form a Filamin repeat. Kelch repeat units lie at residues 562 to 608 (ELVL…VLSD) and 610 to 661 (ELVV…AVSA). The tract at residues 653 to 720 (PKGAAAVSAE…SRPVSAKPAP (68 aa)) is disordered. Residues 655 to 689 (GAAAVSAEPSAEPAAEPAAEPAAEPDADAPAAEPA) show a composition bias toward low complexity. Positions 690–705 (AEGEEGAVPAEGEEGA) are enriched in acidic residues. Kelch repeat units lie at residues 750 to 801 (LYVM…ATGN) and 864 to 913 (KLFL…TLSG). 2 coiled-coil regions span residues 1261 to 1334 (ELHK…MIAN) and 1382 to 1450 (KKEL…RRAF). AAA regions lie at residues 1678–1921 (YGYE…VLVV) and 1981–2225 (DVIV…KSYS). ATP is bound by residues 1716–1723 (GPAGTGKT) and 2019–2026 (GPTGTGRT). One copy of the Kelch 11 repeat lies at 2269–2317 (MIWAFGGGLVEKDGIPYRRNFDKWFKQTWTTVKIPGKGTVYDYFVNPKT). 2 AAA regions span residues 2331 to 2577 (DYDG…VFQG) and 2679 to 2928 (EYNE…ERRY). An ATP-binding site is contributed by 2369-2376 (GGAGVGKT). A coiled-coil region spans residues 2655–2688 (LADKAYDEVADYTSLYKTLTEALNEYNETNAAMD). Residue 2717 to 2724 (GVGGSGKQ) participates in ATP binding. Residues 3003 to 3023 (VGVEKEKVNAENAAAQVEAEK) adopt a coiled-coil conformation. The interval 3003-3262 (VGVEKEKVNA…ERWALTVEQL (260 aa)) is stalk. The stretch at 3070–3117 (LKKPPPGVDDITAVVIILLENNPKDKSWQAAQKLMNNVDKFLERVKSF) is one Kelch 12 repeat. Coiled coils occupy residues 3170–3262 (DVVQ…VEQL) and 3486–3515 (NKER…ELED). The interval 3320–3550 (LVDDALVAGW…AKRVSTEISE (231 aa)) is AAA 5. Residues 3614-3687 (GRKKGKGLKK…VGDAEDEDDE (74 aa)) form a disordered region. The segment covering 3630-3653 (QPMDHQSLMEKARRSSGVGDRRPS) has biased composition (basic and acidic residues). The AAA 6 stretch occupies residues 3843 to 4082 (LQNFCEHMMG…LTTCGDVLYN (240 aa)).

This sequence belongs to the dynein heavy chain family. Consists of at least 3 heavy chains (alpha, beta and gamma), 2 intermediate chains and 8 light chains.

The protein localises to the cell projection. Its subcellular location is the cilium. It is found in the flagellum. It localises to the cytoplasm. The protein resides in the cytoskeleton. The protein localises to the flagellum axoneme. Force generating protein of eukaryotic cilia and flagella. Produces force towards the minus ends of microtubules. Dynein has ATPase activity; the force-producing power stroke is thought to occur on release of ADP. This chain is Dynein alpha chain, flagellar outer arm (ODA11), found in Chlamydomonas reinhardtii (Chlamydomonas smithii).